We begin with the raw amino-acid sequence, 416 residues long: Exodeoxyribonuclease 7 large subunit (416 aa).

It belongs to the XseA family. As to quaternary structure, heterooligomer composed of large and small subunits.

It is found in the cytoplasm. It catalyses the reaction Exonucleolytic cleavage in either 5'- to 3'- or 3'- to 5'-direction to yield nucleoside 5'-phosphates.. In terms of biological role, bidirectionally degrades single-stranded DNA into large acid-insoluble oligonucleotides, which are then degraded further into small acid-soluble oligonucleotides. The protein is Exodeoxyribonuclease 7 large subunit of Nitratiruptor sp. (strain SB155-2).